The sequence spans 288 residues: Acetyl-coenzyme A carboxylase carboxyl transferase subunit beta (288 aa).

Residues 33–288 (LFSQCPGCKH…LVRLHGGSPR (256 aa)) enclose the CoA carboxyltransferase N-terminal domain. Cysteine 37, cysteine 40, cysteine 55, and cysteine 58 together coordinate Zn(2+). The C4-type zinc finger occupies 37 to 58 (CPGCKHTIYQKDLGSERICPHC).

Belongs to the AccD/PCCB family. As to quaternary structure, acetyl-CoA carboxylase is a heterohexamer composed of biotin carboxyl carrier protein (AccB), biotin carboxylase (AccC) and two subunits each of ACCase subunit alpha (AccA) and ACCase subunit beta (AccD). It depends on Zn(2+) as a cofactor.

Its subcellular location is the cytoplasm. The enzyme catalyses N(6)-carboxybiotinyl-L-lysyl-[protein] + acetyl-CoA = N(6)-biotinyl-L-lysyl-[protein] + malonyl-CoA. It participates in lipid metabolism; malonyl-CoA biosynthesis; malonyl-CoA from acetyl-CoA: step 1/1. Component of the acetyl coenzyme A carboxylase (ACC) complex. Biotin carboxylase (BC) catalyzes the carboxylation of biotin on its carrier protein (BCCP) and then the CO(2) group is transferred by the transcarboxylase to acetyl-CoA to form malonyl-CoA. The sequence is that of Acetyl-coenzyme A carboxylase carboxyl transferase subunit beta from Streptococcus pneumoniae serotype 4 (strain ATCC BAA-334 / TIGR4).